A 138-amino-acid chain; its full sequence is Acidic phospholipase A2 BITP01A (138 aa).

Positions 1–16 (MRTLWIMAVLLVGVEG) are cleaved as a signal peptide. Intrachain disulfides connect Cys42/Cys131, Cys44/Cys60, Cys59/Cys111, Cys65/Cys138, Cys66/Cys104, Cys73/Cys97, and Cys91/Cys102. Ca(2+)-binding residues include Tyr43, Gly45, and Gly47. His63 is a catalytic residue. Residue Asp64 participates in Ca(2+) binding. Asp105 is a catalytic residue.

Ca(2+) is required as a cofactor. In terms of tissue distribution, expressed by the venom gland.

It is found in the secreted. The enzyme catalyses a 1,2-diacyl-sn-glycero-3-phosphocholine + H2O = a 1-acyl-sn-glycero-3-phosphocholine + a fatty acid + H(+). Its function is as follows. Snake venom phospholipase A2 (PLA2) that induces edema in mice, produces neuromuscular blockade in chick biventer cervicis, increases CK release and produces myonecrosis. PLA2 catalyzes the calcium-dependent hydrolysis of the 2-acyl groups in 3-sn-phosphoglycerides. The protein is Acidic phospholipase A2 BITP01A of Bothrops insularis (Golden lancehead).